A 134-amino-acid chain; its full sequence is Cell division protein SepF (134 aa).

This sequence belongs to the SepF family. In terms of assembly, homodimer. Interacts with FtsZ.

The protein resides in the cytoplasm. Its function is as follows. Cell division protein that is part of the divisome complex and is recruited early to the Z-ring. Probably stimulates Z-ring formation, perhaps through the cross-linking of FtsZ protofilaments. Its function overlaps with FtsA. This Caldanaerobacter subterraneus subsp. tengcongensis (strain DSM 15242 / JCM 11007 / NBRC 100824 / MB4) (Thermoanaerobacter tengcongensis) protein is Cell division protein SepF.